Reading from the N-terminus, the 161-residue chain is Probable chemoreceptor glutamine deamidase CheD (161 aa).

Belongs to the CheD family.

The catalysed reaction is L-glutaminyl-[protein] + H2O = L-glutamyl-[protein] + NH4(+). Functionally, probably deamidates glutamine residues to glutamate on methyl-accepting chemotaxis receptors (MCPs), playing an important role in chemotaxis. The chain is Probable chemoreceptor glutamine deamidase CheD from Syntrophomonas wolfei subsp. wolfei (strain DSM 2245B / Goettingen).